Consider the following 301-residue polypeptide: MTRHGKNCTAGAVYTYHEKKKDTAASGYGTQNIRLSRDAVKDFDCCCLSLQPCHDPVVTPDGYLYEREAILEYILHQKKEIARQMKAYEKQRGTRREEQKELQRAASQDHVRGFLEKESAIVSRPLNPFTAKALSGTSPDNAQPGPSVGPPSKDKDKVLPSFWIPSLTPEAKATKLEKPSRTVTCPMSGKPLRMSDLTPVHFTPLDSSVDRVGLITRSERYVCAVTRDSLSNATPCAVLRPSGAVVTLECVEKLIRKDMVDPVTGDKLTDRDIIVLQRGGTGFAGSGVKLQAEKSRPVMQA.

Serine 36 bears the Phosphoserine mark. The interval 55 to 75 (DPVVTPDGYLYEREAILEYIL) is U-box-like. A Nuclear localization signal motif is present at residues 78–101 (KKEIARQMKAYEKQRGTRREEQKE). Phosphoserine is present on serine 107. Residues 131–155 (AKALSGTSPDNAQPGPSVGPPSKDK) form a disordered region.

The protein belongs to the NOSIP family. Interacts with NOS1 and NOS3. Interacts with PP2A holoenzyme, containing PPP2CA, PPP2CB, PPP2R1A and PPP2R2A subunits.

Its subcellular location is the cytoplasm. The protein resides in the nucleus. It carries out the reaction S-ubiquitinyl-[E2 ubiquitin-conjugating enzyme]-L-cysteine + [acceptor protein]-L-lysine = [E2 ubiquitin-conjugating enzyme]-L-cysteine + N(6)-ubiquitinyl-[acceptor protein]-L-lysine.. Functionally, E3 ubiquitin-protein ligase that is essential for proper development of the forebrain, the eye, and the face. Catalyzes monoubiquitination of serine/threonine-protein phosphatase 2A (PP2A) catalytic subunit PPP2CA/PPP2CB. Negatively regulates nitric oxide production by inducing NOS1 and NOS3 translocation to actin cytoskeleton and inhibiting their enzymatic activity. The chain is Nitric oxide synthase-interacting protein (NOSIP) from Macaca fascicularis (Crab-eating macaque).